We begin with the raw amino-acid sequence, 399 residues long: Developmentally-regulated G-protein 1 (399 aa).

The 226-residue stretch at 63-288 (GRVALIGFPS…LLARMWDEMG (226 aa)) folds into the OBG-type G domain. GTP is bound by residues 69 to 76 (GFPSVGKS), 115 to 119 (DLPGI), and 246 to 249 (NKID). The TGS domain occupies 288–366 (GLVRVYSKPQ…EDEDVVQIVK (79 aa)). The tract at residues 367–399 (KKERDEGGRGRFKSHSNAPARIADREKKAPLKQ) is disordered. Positions 388–399 (IADREKKAPLKQ) are enriched in basic and acidic residues.

Belongs to the TRAFAC class OBG-HflX-like GTPase superfamily. OBG GTPase family. In terms of tissue distribution, expressed in actively growing tissues and reproductive organs. Mostly expressed in leaves, stems and siliques. Also present in flowers and flower buds, and, to a lower extent, in roots.

The protein resides in the cytoplasmic vesicle. The protein localises to the cytoplasm. In terms of biological role, binds GDP and GTP, and has low GTPase activity. May interact with phosphatidic acid (PA). The polypeptide is Developmentally-regulated G-protein 1 (DRG1) (Arabidopsis thaliana (Mouse-ear cress)).